The primary structure comprises 425 residues: Histone-binding protein RBBP4-B (425 aa).

Position 2 is an N-acetylalanine (alanine 2). WD repeat units lie at residues 32-125 (YDLV…NHEG), 126-175 (EVNR…RLRG), 176-223 (HQKE…KTIF), 225-270 (GHTA…HSVD), 271-314 (AHTA…HSFE), 315-371 (SHKD…FIHG), and 372-404 (GHTAKISDFSWNPNEPWVICSVSEDNIMQVWQM).

It belongs to the WD repeat RBAP46/RBAP48/MSI1 family. In terms of assembly, binds directly to histone H4, probably via helix 1 of the histone fold, a region that is not accessible when histone H4 is in chromatin. Probably forms a large corepressor complex that contains ncor1, sin3a, hdac1-A and/or hdac1-B, hdac2, rbbp4-A and/or rbbp4-B and possibly rbbp7.

The protein resides in the nucleus. It localises to the chromosome. Its subcellular location is the telomere. Its function is as follows. Core histone-binding subunit that may target chromatin assembly factors, chromatin remodeling factors and histone deacetylases to their histone substrates in a manner that is regulated by nucleosomal DNA. Component of several complexes which regulate chromatin metabolism. The polypeptide is Histone-binding protein RBBP4-B (rbbp4-b) (Xenopus laevis (African clawed frog)).